The chain runs to 220 residues: Histone deacetylase complex subunit SAP30 (220 aa).

Positions 1–129 (MNGFTPDEMS…QSVRNRRKRK (129 aa)) are interaction with NCOR1. Position 5 is a phosphothreonine (Thr-5). The segment at 67–115 (CCLREDGERCGRAAGNASFSKRIQKSISQKKVKIELDKSARHLYICDYH) adopts an Atypical zinc-finger fold. Lys-87 participates in a covalent cross-link: Glycyl lysine isopeptide (Lys-Gly) (interchain with G-Cter in SUMO2). The tract at residues 123-143 (RNRRKRKGSDDDGGDSPVQDI) is disordered. Residues 130 to 220 (GSDDDGGDSP…SDLKVDSGVH (91 aa)) form an interaction with SIN3A region. Ser-131 and Ser-138 each carry phosphoserine. At Thr-145 the chain carries Phosphothreonine. Residues Lys-194, Lys-205, and Lys-214 each participate in a glycyl lysine isopeptide (Lys-Gly) (interchain with G-Cter in SUMO2) cross-link.

Belongs to the SAP30 family. In terms of assembly, component of the histone deacetylase complex that includes at least SIN3A, HDAC1 and HDAC2. Found in a complex composed of at least SINHCAF, SIN3A, HDAC1, SAP30, RBBP4, OGT and TET1. Interacts with HDAC1. Interacts with SIN3A, SIN3B, HDAC2, RBBP4 and NCOR1. Interacts with SAMSN1. Interacts with HCFC1. Interacts with SAP30BP. Expressed in all tissues tested with highest levels in pancreas, ovary, PBL, spleen and thymus; lowest levels in brain, placenta, lung and kidney.

It is found in the nucleus. Functionally, involved in the functional recruitment of the Sin3-histone deacetylase complex (HDAC) to a specific subset of N-CoR corepressor complexes. Capable of transcription repression by N-CoR. Active in deacetylating core histone octamers (when in a complex) but inactive in deacetylating nucleosomal histones. In terms of biological role, (Microbial infection) Involved in transcriptional repression of HHV-1 genes TK and gC. The protein is Histone deacetylase complex subunit SAP30 of Homo sapiens (Human).